The sequence spans 165 residues: MTEKIGLFTGTFDPLTNGHLDVIKRASQHFDQLYVGIFKNDQKNPLFPTDKRVEMLEEALTSLSVTHKVKVIKHERDLTVNIAKKLGVTALVRSLRNSQDLEYEKNMFYFNMEMTGIETIFFLAKPELEPLNSTRMRELHAFGQDVSAWVPENVSRELRKLDEKK.

Substrate is bound at residue T11. Residues 11-12 and H19 each bind ATP; that span reads TF. Residues K43, T79, and R93 each contribute to the substrate site. Residues E104 and 128–134 each bind ATP; that span reads LEPLNST.

Belongs to the bacterial CoaD family. Homohexamer. It depends on Mg(2+) as a cofactor.

It localises to the cytoplasm. The enzyme catalyses (R)-4'-phosphopantetheine + ATP + H(+) = 3'-dephospho-CoA + diphosphate. Its pathway is cofactor biosynthesis; coenzyme A biosynthesis; CoA from (R)-pantothenate: step 4/5. Reversibly transfers an adenylyl group from ATP to 4'-phosphopantetheine, yielding dephospho-CoA (dPCoA) and pyrophosphate. This is Phosphopantetheine adenylyltransferase from Lactococcus lactis subsp. lactis (strain IL1403) (Streptococcus lactis).